A 212-amino-acid polypeptide reads, in one-letter code: ATP-dependent dethiobiotin synthetase BioD (212 aa).

An ATP-binding site is contributed by 10–15 (GVGKTF). Thr-14 serves as a coordination point for Mg(2+). Residue Lys-36 is part of the active site. Residue Ser-40 participates in substrate binding. ATP is bound by residues Asp-45, 106 to 109 (EGAG), and 167 to 168 (NC). Mg(2+) is bound by residues Asp-45 and Glu-106.

It belongs to the dethiobiotin synthetase family. In terms of assembly, homodimer. The cofactor is Mg(2+).

Its subcellular location is the cytoplasm. It catalyses the reaction (7R,8S)-7,8-diammoniononanoate + CO2 + ATP = (4R,5S)-dethiobiotin + ADP + phosphate + 3 H(+). It participates in cofactor biosynthesis; biotin biosynthesis; biotin from 7,8-diaminononanoate: step 1/2. In terms of biological role, catalyzes a mechanistically unusual reaction, the ATP-dependent insertion of CO2 between the N7 and N8 nitrogen atoms of 7,8-diaminopelargonic acid (DAPA, also called 7,8-diammoniononanoate) to form a ureido ring. This is ATP-dependent dethiobiotin synthetase BioD from Methanococcus aeolicus (strain ATCC BAA-1280 / DSM 17508 / OCM 812 / Nankai-3).